Consider the following 1023-residue polypeptide: Solute carrier family 12 member 3 (1023 aa).

Topologically, residues 1–134 (MELPGDGVHL…EPPPEPPRFG (134 aa)) are cytoplasmic. Residues 91-131 (DPEQDDFKPPMYEETAGERMGGGDSSEEEEEEHKEPPPEPP) form a disordered region. Residues 135–164 (WVQGVMIRCMLNIWGVILYLRLPWITAQAG) form a discontinuously helical membrane-spanning segment. Positions 145 and 148 each coordinate Na(+). The helical transmembrane segment at 165-186 (IGLTWVIILLSSFITGITGLST) threads the bilayer. At 187 to 217 (SAIATNGKVKGGGTYFLISRSLGPELGGSIG) the chain is on the cytoplasmic side. A helical membrane pass occupies residues 218 to 240 (LIFAFANAVAVAMHTVGFAETVT). Residues 241–252 (DLMRENGVVMVD) lie on the Extracellular side of the membrane. The next 2 helical transmembrane spans lie at 253 to 277 (PIND…AGME) and 278 to 300 (WESK…YIVG). Residues 301-335 (TIIPASPQKQAKGFFSYKAEIFAANFVPGWRGKEG) lie on the Extracellular side of the membrane. A discontinuously helical transmembrane segment spans residues 336-357 (SFFGMFSIFFPSATGILAGANI). Positions 350, 351, and 352 each coordinate chloride. At 358-368 (SGDLKDPTVAI) the chain is on the cytoplasmic side. Residues 369–390 (PRGTLMAIFWTTISYLIISATI) traverse the membrane as a helical segment. The Extracellular portion of the chain corresponds to 391–452 (GACVVRDASG…YQSMSLVSAF (62 aa)). 2 N-linked (GlcNAc...) asparagine glycosylation sites follow: Asn403 and Asn414. Disulfide bonds link Cys415–Cys420 and Cys429–Cys435. Residue Asn432 is glycosylated (N-linked (GlcNAc...) asparagine). The helical transmembrane segment at 453–476 (APLISAGIFGATLSSALACLVSAP) threads the bilayer. The Na(+) site is built by Ala463, Ser466, and Ser467. Over 477–506 (KVFQCLCKDQLYPLIGFFGKGYGKNAEPLR) the chain is Cytoplasmic. A helical membrane pass occupies residues 507 to 521 (AYLLTYVIAVCFVLI). Topologically, residues 522–526 (AELNT) are extracellular. A helical membrane pass occupies residues 527–543 (IAPIISNFFLCSYALIN). Tyr539 lines the chloride pocket. Over 544 to 566 (FSCFHASVTNSPGWRPSFRFYSK) the chain is Cytoplasmic. The next 2 membrane-spanning stretches (helical) occupy residues 567-586 (WLSL…LTWW) and 587-598 (AALIAFGVVFFL). At 599–1023 (LGYTLYKKPA…QENVLTFYCQ (425 aa)) the chain is on the cytoplasmic side. The tract at residues 614 to 629 (SVQASSYSMALNQCVG) is scissor helix. ATP contacts are provided by Leu647, Arg654, Val676, Gly733, and Leu772.

It belongs to the SLC12A transporter family. Homodimer; adopts a domain-swap conformation at the scissor helices connecting the transmembrane domain and C-terminal domain. Expressed in urinary bladder, intestine, ovary, skeletal muscle, eye, brain, and kidney.

The protein localises to the cell membrane. The catalysed reaction is chloride(out) + Na(+)(out) = chloride(in) + Na(+)(in). With respect to regulation, inhibited by thiazide-type diuretics including polythiazide, metolazone, cyclothiazide, hydrochlorothiazide and chlorthalidone. Thiazide drugs, specifically inhibit SLC12A3/NCC transporter activity by competing with chloride for binding. Functionally, electroneutral sodium and chloride ion cotransporter, with a coupling ratio 1 Na(+):1 Cl(-). Mediates sodium and chloride reabsorption. This Pseudopleuronectes americanus (Winter flounder) protein is Solute carrier family 12 member 3 (slc12a3).